The sequence spans 416 residues: UDP-N-acetylmuramoylalanine--D-glutamate ligase (416 aa).

104-110 (GSNGKST) serves as a coordination point for ATP.

The protein belongs to the MurCDEF family.

The protein localises to the cytoplasm. The enzyme catalyses UDP-N-acetyl-alpha-D-muramoyl-L-alanine + D-glutamate + ATP = UDP-N-acetyl-alpha-D-muramoyl-L-alanyl-D-glutamate + ADP + phosphate + H(+). It participates in cell wall biogenesis; peptidoglycan biosynthesis. In terms of biological role, cell wall formation. Catalyzes the addition of glutamate to the nucleotide precursor UDP-N-acetylmuramoyl-L-alanine (UMA). The chain is UDP-N-acetylmuramoylalanine--D-glutamate ligase from Francisella tularensis subsp. tularensis (strain WY96-3418).